A 29-amino-acid polypeptide reads, in one-letter code: Prolamin alpha-1 (29 aa).

The sequence is that of Prolamin alpha-1 from Dactylis glomerata (Orchard grass).